An 858-amino-acid polypeptide reads, in one-letter code: Piwi-like protein 1 (858 aa).

Positions 1–13 (MTGRARARSRGRG) are enriched in basic residues. A disordered region spans residues 1-56 (MTGRARARSRGRGRGQEPAAPGAQPPVSQEAAKPVVSTPSEGQLVGRGRQKPAPGA). The span at 16–26 (QEPAAPGAQPP) shows a compositional bias: low complexity. The 113-residue stretch at 276–388 (TVLDFMYSLR…LVPEFCYLTG (113 aa)) folds into the PAZ domain. Residues 314–316 (TYR) are required for binding 2'-O-methylated 3'-end of piRNAs. The interval 476–612 (SKEMRGLPLI…LQMNCKMGGE (137 aa)) is MID region. A Piwi domain is found at 552–844 (MVVVILPTNR…LAFLVGQSIH (293 aa)). Catalysis depends on residues Asp629, Glu667, Asp699, and His833.

It belongs to the argonaute family. Piwi subfamily. Requires Mg(2+) as cofactor. Methylated on arginine residues; required for the interaction with Tudor domain-containing protein and subsequent localization to the meiotic nuage, also named P granule. As to expression, expressed exclusively in the adult gonads; expression in the ovary weaker than in the testis (at protein level). During neurogenesis and organogenesis, expression is detected in CNS (midbrain and eye) and fin buds. Starting from 24 hours post-fertilization, expression is found in the genital ridge.

It is found in the cytoplasm. Functionally, plays a central role during gametogenesis by repressing transposable elements and preventing their mobilization, which is essential for the germline integrity. Acts via the piRNA metabolic process, which mediates the repression of transposable elements during meiosis by forming complexes composed of piRNAs and Piwi proteins and governs the methylation and subsequent repression of transposons. Directly binds methylated piRNAs, a class of 24 to 30 nucleotide RNAs that are generated by a Dicer-independent mechanism and are primarily derived from transposons and other repeated sequence elements. Has a strong preference for piRNAs with a uridine nucleotide at their 5'-end (g1U preference, also named 1U-bias) and binds piRNAs in an opposite direction compared to piwil2/zili. Participates in a piRNA amplification loop with piwil2/zili. Not involved in the piRNA amplification loop, also named ping-pong amplification cycle. Acts as an endoribonuclease that cleaves transposon messenger RNAs. This Danio rerio (Zebrafish) protein is Piwi-like protein 1 (piwil1).